The primary structure comprises 143 residues: Large ribosomal subunit protein mL51 (143 aa).

Residues 1 to 52 (MAALVRGLMRRVAALPQAVRSVSGGGQRHEPYRPLPITSPLAGLPRNFRVRE) constitute a mitochondrion transit peptide.

It belongs to the mitochondrion-specific ribosomal protein mL51 family. In terms of assembly, component of the mitochondrial ribosome large subunit (39S) which comprises a 16S rRNA and about 50 distinct proteins.

It is found in the mitochondrion. This chain is Large ribosomal subunit protein mL51 (MRPL51), found in Gallus gallus (Chicken).